Consider the following 342-residue polypeptide: Probable dual-specificity RNA methyltransferase RlmN (342 aa).

Catalysis depends on glutamate 91, which acts as the Proton acceptor. The Radical SAM core domain occupies 97–326 (YKFGNTACVS…CTVRRELGSD (230 aa)). A disulfide bridge links cysteine 104 with cysteine 331. [4Fe-4S] cluster is bound by residues cysteine 111, cysteine 115, and cysteine 118. Residues 157–158 (GE), serine 189, 212–214 (SLH), and asparagine 288 each bind S-adenosyl-L-methionine. The active-site S-methylcysteine intermediate is cysteine 331.

Belongs to the radical SAM superfamily. RlmN family. It depends on [4Fe-4S] cluster as a cofactor.

The protein resides in the cytoplasm. It catalyses the reaction adenosine(2503) in 23S rRNA + 2 reduced [2Fe-2S]-[ferredoxin] + 2 S-adenosyl-L-methionine = 2-methyladenosine(2503) in 23S rRNA + 5'-deoxyadenosine + L-methionine + 2 oxidized [2Fe-2S]-[ferredoxin] + S-adenosyl-L-homocysteine. It carries out the reaction adenosine(37) in tRNA + 2 reduced [2Fe-2S]-[ferredoxin] + 2 S-adenosyl-L-methionine = 2-methyladenosine(37) in tRNA + 5'-deoxyadenosine + L-methionine + 2 oxidized [2Fe-2S]-[ferredoxin] + S-adenosyl-L-homocysteine. Functionally, specifically methylates position 2 of adenine 2503 in 23S rRNA and position 2 of adenine 37 in tRNAs. The sequence is that of Probable dual-specificity RNA methyltransferase RlmN from Caldanaerobacter subterraneus subsp. tengcongensis (strain DSM 15242 / JCM 11007 / NBRC 100824 / MB4) (Thermoanaerobacter tengcongensis).